A 312-amino-acid chain; its full sequence is Glycerol 2-dehydrogenase (NADP(+)) (312 aa).

Tyr56 serves as the catalytic Proton donor. Residue His112 participates in substrate binding. Residue 220–274 (SPLGSTDAPLLKEPVILEIAKKNNVQPGHVVISWHVQRGYVVLPKSVNPDRIKTN) coordinates NADP(+). The residue at position 306 (Ser306) is a Phosphoserine.

Belongs to the aldo/keto reductase family.

It localises to the cytoplasm. It catalyses the reaction glycerol + NADP(+) = dihydroxyacetone + NADPH + H(+). In terms of biological role, glycerol dehydrogenase involved in glycerol catabolism under microaerobic conditions. Has mRNA binding activity. The chain is Glycerol 2-dehydrogenase (NADP(+)) (GCY1) from Saccharomyces cerevisiae (strain ATCC 204508 / S288c) (Baker's yeast).